A 354-amino-acid polypeptide reads, in one-letter code: MELGLSLGDAVTVADGGRLELVLGLGVGVGAGVRRGEEEERGRREDVVGAGRWAAMAAASPEPSVRLSLVSSLGLHWPSETGRSEAAARGFDVNRAPSVAAGAPGMEDDEEGPGAAPALSSSPNDSGGSFPLDLSGQGLRGHAEAAAQGGGGGGGGERSSSRASDDDEGASARKKLRLSKEQSAFLEESFKEHSTLNPKQKVALAKQLNLRPRQVEVWFQNRRARTKLKQTEVDCEYLKRCCETLTEENRRLHKELAELRALKTARPFYMHLPATTLSMCPSCERVASNPATASTSAPAAATSPAAAPTAAARTAVASPEPHRPSSFAALFAAPLGFPLTAAQPRPPPPASNCL.

The segment at 98 to 175 is disordered; sequence SVAAGAPGME…DDEGASARKK (78 aa). Gly residues predominate over residues 148–157; it reads QGGGGGGGGE. Positions 171–230 form a DNA-binding region, homeobox; that stretch reads SARKKLRLSKEQSAFLEESFKEHSTLNPKQKVALAKQLNLRPRQVEVWFQNRRARTKLKQ. The interval 229–273 is leucine-zipper; the sequence is KQTEVDCEYLKRCCETLTEENRRLHKELAELRALKTARPFYMHLP. The tract at residues 294 to 323 is disordered; the sequence is STSAPAAATSPAAAPTAAARTAVASPEPHR.

The protein belongs to the HD-ZIP homeobox family. Class II subfamily. As to expression, expressed in seedlings, roots, stems, leaf sheaths and blades and panicles.

It is found in the nucleus. Probable transcription factor. This Oryza sativa subsp. japonica (Rice) protein is Homeobox-leucine zipper protein HOX27 (HOX27).